We begin with the raw amino-acid sequence, 171 residues long: MIDTDGFRPNVGIILADGSGRVLWARRVGGQDAWQFPQGGIKESESAEQALYRELQEEVGLKAEDVEILAVTQGWLRYRLPQKLVRQKEPRCVGQKQKWFLLKMLAEDSAVDLIGGGPPEFDEWRWVSYWYPLSKVVSFKREVYRRALKELVAPHNSLLSGLPLVDGESLC.

The region spanning 6–149 (GFRPNVGIIL…KREVYRRALK (144 aa)) is the Nudix hydrolase domain. The Nudix box motif lies at 39 to 60 (GGIKESESAEQALYRELQEEVG).

This sequence belongs to the Nudix hydrolase family. RppH subfamily. The cofactor is a divalent metal cation.

In terms of biological role, accelerates the degradation of transcripts by removing pyrophosphate from the 5'-end of triphosphorylated RNA, leading to a more labile monophosphorylated state that can stimulate subsequent ribonuclease cleavage. This Teredinibacter turnerae (strain ATCC 39867 / T7901) protein is RNA pyrophosphohydrolase.